The sequence spans 29 residues: Dermaseptin-J9 (29 aa).

As to expression, expressed by the skin glands.

The protein resides in the secreted. Functionally, has antimicrobial activity. This Phasmahyla jandaia (Jandaia leaf frog) protein is Dermaseptin-J9.